A 391-amino-acid chain; its full sequence is MVMFKKIKSFEVVFNDPEKVYGSGEKVAGRVIVEVCEVTRVKAVRILACGVAKVLWMQGSQQCKQTSEYLRYEDTLLLEDQPTGENEMVIMRPGNKYEYKFGFELPQGPLGTSFKGKYGCVDYWVKAFLDRPSQPTQETKKNFEVVDLVDVNTPDLMAPVSAKKEKKVSCMFIPDGRVSVSARIDRKGFCEGDEISIHADFENTCSRIVVPKAAIVARHTYLANGQTKVLTQKLSSVRGNHIISGTCASWRGKSLRVQKIRPSILGCNILRVEYSLLIYVSVPGSKKVILDLPLVIGSRSGLSSRTSSMASRTSSEMSWVDLNIPDTPEAPPCYMDVIPEDHRLESPTTPLLDDMDGSQDSPIFMYAPEFKFMPPPTYTEVDPCILNNNVQ.

Lysine 212 participates in a covalent cross-link: Glycyl lysine isopeptide (Lys-Gly) (interchain with G-Cter in ubiquitin). Residue serine 361 is modified to Phosphoserine.

This sequence belongs to the arrestin family. Homodimer; disulfide-linked. Interacts with TXN/thioredoxin through its redox-active site. Interacts with transcriptional repressors ZBTB16, ZBTB32 and HDAC1. Interacts with DDIT4. In terms of processing, ubiquitinated; undergoes heterotypic 'Lys-48'-/'Lys-63'-branched polyubiquitination catalyzed by ITCH and UBR5 resulting in proteasomal degradation. Deubiquitinated by USP5, leading to TXNIP stabilization.

It localises to the cytoplasm. The protein localises to the nucleus. Its function is as follows. May act as an oxidative stress mediator by inhibiting thioredoxin activity or by limiting its bioavailability. Interacts with COPS5 and restores COPS5-induced suppression of CDKN1B stability, blocking the COPS5-mediated translocation of CDKN1B from the nucleus to the cytoplasm. Functions as a transcriptional repressor, possibly by acting as a bridge molecule between transcription factors and corepressor complexes, and over-expression will induce G0/G1 cell cycle arrest. Required for the maturation of natural killer cells. Acts as a suppressor of tumor cell growth. Inhibits the proteasomal degradation of DDIT4, and thereby contributes to the inhibition of the mammalian target of rapamycin complex 1 (mTORC1). The chain is Thioredoxin-interacting protein (TXNIP) from Homo sapiens (Human).